The sequence spans 312 residues: Glycine--tRNA ligase alpha subunit (312 aa).

It belongs to the class-II aminoacyl-tRNA synthetase family. As to quaternary structure, tetramer of two alpha and two beta subunits.

It localises to the cytoplasm. It carries out the reaction tRNA(Gly) + glycine + ATP = glycyl-tRNA(Gly) + AMP + diphosphate. This is Glycine--tRNA ligase alpha subunit from Delftia acidovorans (strain DSM 14801 / SPH-1).